Consider the following 218-residue polypeptide: Small ribosomal subunit protein uS3c (218 aa).

The region spanning V47–A118 is the KH type-2 domain.

This sequence belongs to the universal ribosomal protein uS3 family. In terms of assembly, part of the 30S ribosomal subunit.

Its subcellular location is the plastid. It is found in the chloroplast. The chain is Small ribosomal subunit protein uS3c (rps3) from Nicotiana sylvestris (Wood tobacco).